We begin with the raw amino-acid sequence, 725 residues long: MDDSDTPTYYLQIEPQDGCHPGDSVERSVTCLPSASDENENQLDGDGHEHLTSSDSAMGKPQVSEQDSLNNNESCTLSCEVAAGENLQNTLCEASRDEQAFLGKDKKIPGKRSPRSKKGTAKKIPPGLFSGDIAPLMQEKVLSAVTYAVDDEEAAEVNANEQPEAPKLVLQSLFSLIRGEVEQLDSRALPLCLHQIAESYFQEEDYEKAMKFIQLERLYHEQLLANLSAIQEQWETKWKTVQPHTVTALRNSEKGFNGEDFERLTKICATHQDPLLSKHKIAAVEKSQERKCSTQLLVSEDPKEGGATTKESESKTCLGTESSKESQHTVEPLGSSPCCHQMDVQTDSPSLSVTAGKDHMEELLCSAEATLALHTQSSETAGSPSGPDSSEDACEDDSRLQLAQTEACQDVARIEGIAEDPKVFLSSKSKTEPLISPGCDRIPPALISEGKYSQAQRKELRLPLRDASEALPTDQLENNELNELQQPDLTDSDGKSPQAQADSDGSENVLCGNNQISDLGILLPEVCMAPEEKGDKDDQLNKETEDYLNSLLEGCLKDTEDSLSYEDNQDDDSDLLQDLSPEEASYSLQENLPSDESCLSLDDLAKRIEIAEVVPTEGLVSILKKRNDTVGDHPAQMQHKPSKRRVRFQEIDDSLDQDEVGGGSCILLVLLCIATVFLSVGGTALYCTFGDMESPVCTDFADNMDFYYTKLLQGVAELKHWIYLS.

Disordered stretches follow at residues 1 to 72, 103 to 124, 296 to 353, 375 to 397, and 485 to 510; these read MDDS…LNNN, GKDK…AKKI, LLVS…SLSV, TQSS…CEDD, and QQPD…ENVL. Over 1-664 the chain is Cytoplasmic; the sequence is MDDSDTPTYY…LDQDEVGGGS (664 aa). Polar residues predominate over residues 63 to 72; the sequence is VSEQDSLNNN. A compositionally biased stretch (basic residues) spans 109 to 121; the sequence is PGKRSPRSKKGTA. The segment covering 300-314 has biased composition (basic and acidic residues); it reads EDPKEGGATTKESES. Polar residues-rich tracts occupy residues 343–353 and 375–388; these read DVQTDSPSLSV and TQSS…SGPD. Residues 665–685 traverse the membrane as a helical segment; the sequence is CILLVLLCIATVFLSVGGTAL. Residues 686–725 are Extracellular-facing; the sequence is YCTFGDMESPVCTDFADNMDFYYTKLLQGVAELKHWIYLS.

Belongs to the CNST family. In terms of assembly, interacts with connexins GJA1/CX43, GJB1/CX32, GJB2/CX26, GJB3/CX31, GJB6/CX30 and GJC1/CX45. Also interacts with GGA1 and GGA2. Does not interact with PANX1.

It is found in the cell membrane. The protein localises to the golgi apparatus. Its subcellular location is the trans-Golgi network membrane. It localises to the cytoplasmic vesicle. The protein resides in the secretory vesicle. Its function is as follows. Required for targeting of connexins to the plasma membrane. This chain is Consortin (CNST), found in Homo sapiens (Human).